The chain runs to 440 residues: Collagen alpha-1(XXVI) chain (440 aa).

An N-terminal signal peptide occupies residues 1 to 20 (MKLVLLLPWACCCLCGSALA). The EMI domain maps to 52-128 (RRHWCHHTVT…PGFTGSNCEE (77 aa)). 3 disulfide bridges follow: C56–C118, C83–C89, and C117–C126. An N-linked (GlcNAc...) asparagine glycan is attached at N70. Residue N132 is glycosylated (N-linked (GlcNAc...) asparagine). Disordered regions lie at residues 157–362 (EQPS…EGEG) and 390–440 (LASP…GDRK). Positions 199 to 267 (GPAGPPGQMG…PGPAGSPGLL (69 aa)) constitute a Collagen-like 1 domain. Composition is skewed to pro residues over residues 200 to 215 (PAGPPGQMGPPGPAGP), 231 to 243 (VGPPGLLGPPGPR), and 252 to 261 (PGPPGPPGPA). The segment covering 269–281 (NTPQGVLYSLQTP) has biased composition (polar residues). In terms of domain architecture, Collagen-like 2 spans 302–334 (GIPGPRGPPGPPGPPGPHGPPGPPGAPGSQGLV). Pro residues predominate over residues 306 to 327 (PRGPPGPPGPPGPHGPPGPPGA). The span at 347-356 (SVKEEEDKAS) shows a compositional bias: basic and acidic residues.

In terms of assembly, homotrimer or heterotrimer. Hydroxylated on proline residues. Post-translationally, N-glycosylated. Specifically expressed in the testis and ovary in adult tissues.

Its subcellular location is the secreted. It localises to the extracellular space. The protein resides in the extracellular matrix. This chain is Collagen alpha-1(XXVI) chain (Col26a1), found in Mus musculus (Mouse).